The chain runs to 341 residues: Tetraacyldisaccharide 4'-kinase (341 aa).

Residue 54-61 participates in ATP binding; sequence TVGGAGKT.

It belongs to the LpxK family.

The catalysed reaction is a lipid A disaccharide + ATP = a lipid IVA + ADP + H(+). Its pathway is glycolipid biosynthesis; lipid IV(A) biosynthesis; lipid IV(A) from (3R)-3-hydroxytetradecanoyl-[acyl-carrier-protein] and UDP-N-acetyl-alpha-D-glucosamine: step 6/6. In terms of biological role, transfers the gamma-phosphate of ATP to the 4'-position of a tetraacyldisaccharide 1-phosphate intermediate (termed DS-1-P) to form tetraacyldisaccharide 1,4'-bis-phosphate (lipid IVA). The chain is Tetraacyldisaccharide 4'-kinase from Brucella suis (strain ATCC 23445 / NCTC 10510).